The sequence spans 183 residues: Inner membrane protein YgjV (183 aa).

Over 1 to 2 (MT) the chain is Periplasmic. A helical transmembrane segment spans residues 3 to 23 (AYWLAQGVGVIAFLIGITTFF). Over 24–38 (NRDERRFKKQLSVYS) the chain is Cytoplasmic. A helical transmembrane segment spans residues 39-59 (AVIGVHFFLLGTYPAGASAIL). At 60 to 71 (NAIRTLITLRTR) the chain is on the periplasmic side. The next 2 membrane-spanning stretches (helical) occupy residues 72-92 (SLWV…AKFH) and 93-113 (HPVE…LFCC). Residues 114–133 (KGLTMRCVMWFSTCCWVIHN) are Periplasmic-facing. A helical membrane pass occupies residues 134–154 (FWAGSIGGTMIEGSFLLMNGL). The Cytoplasmic portion of the chain corresponds to 155–183 (NIIRFWRMQKRGIDPFKVEKTPSAVDERG).

It is found in the cell inner membrane. In Escherichia coli (strain K12), this protein is Inner membrane protein YgjV (ygjV).